The primary structure comprises 180 residues: UPF0690 protein C1orf52 homolog (180 aa).

Disordered regions lie at residues 1 to 66 (MAAE…SVTR) and 96 to 180 (KIWK…KKKK). Over residues 48-61 (KQAEKRLPGPDELF) the composition is skewed to basic and acidic residues. At T65 the chain carries Phosphothreonine. Y130 carries the phosphotyrosine modification. Acidic residues predominate over residues 149–160 (EGEETVESDDDK). A Phosphoserine modification is found at S156. Over residues 161–180 (DERASKIRRVEPGEAAKKKK) the composition is skewed to basic and acidic residues.

Belongs to the UPF0690 family.

In Mus musculus (Mouse), this protein is UPF0690 protein C1orf52 homolog.